Here is a 428-residue protein sequence, read N- to C-terminus: Serine--tRNA ligase (428 aa).

L-serine is bound at residue 235 to 237 (TAE). 266–268 (RSE) serves as a coordination point for ATP. Glutamate 289 is an L-serine binding site. Residue 353–356 (EISS) coordinates ATP. Serine 389 is a binding site for L-serine.

It belongs to the class-II aminoacyl-tRNA synthetase family. Type-1 seryl-tRNA synthetase subfamily. In terms of assembly, homodimer. The tRNA molecule binds across the dimer.

The protein localises to the cytoplasm. The catalysed reaction is tRNA(Ser) + L-serine + ATP = L-seryl-tRNA(Ser) + AMP + diphosphate + H(+). The enzyme catalyses tRNA(Sec) + L-serine + ATP = L-seryl-tRNA(Sec) + AMP + diphosphate + H(+). Its pathway is aminoacyl-tRNA biosynthesis; selenocysteinyl-tRNA(Sec) biosynthesis; L-seryl-tRNA(Sec) from L-serine and tRNA(Sec): step 1/1. In terms of biological role, catalyzes the attachment of serine to tRNA(Ser). Is also able to aminoacylate tRNA(Sec) with serine, to form the misacylated tRNA L-seryl-tRNA(Sec), which will be further converted into selenocysteinyl-tRNA(Sec). The protein is Serine--tRNA ligase of Shewanella pealeana (strain ATCC 700345 / ANG-SQ1).